Consider the following 222-residue polypeptide: dTTP/UTP pyrophosphatase (222 aa).

Residue Asp83 is the Proton acceptor of the active site.

Belongs to the Maf family. YhdE subfamily. It depends on a divalent metal cation as a cofactor.

Its subcellular location is the cytoplasm. It carries out the reaction dTTP + H2O = dTMP + diphosphate + H(+). The enzyme catalyses UTP + H2O = UMP + diphosphate + H(+). Its function is as follows. Nucleoside triphosphate pyrophosphatase that hydrolyzes dTTP and UTP. May have a dual role in cell division arrest and in preventing the incorporation of modified nucleotides into cellular nucleic acids. The sequence is that of dTTP/UTP pyrophosphatase from Desulfitobacterium hafniense (strain Y51).